A 532-amino-acid chain; its full sequence is Protein DETOXIFICATION 51 (532 aa).

The next 12 membrane-spanning stretches (helical) occupy residues phenylalanine 65–leucine 85, leucine 98–methionine 118, valine 142–isoleucine 162, alanine 176–isoleucine 196, proline 208–valine 228, valine 238–tryptophan 258, valine 290–valine 310, valine 316–leucine 336, leucine 358–alanine 378, isoleucine 395–proline 415, alanine 439–phenylalanine 459, and glycine 461–valine 481.

The protein belongs to the multi antimicrobial extrusion (MATE) (TC 2.A.66.1) family. Expressed in the meristematic regions. Mainly detected in tissues where cells were actively dividing, such as leaf primordia and young leaves, the junction between lateral root and the primary root, root cap, hydathodes, the junction between secondary inflorescence and the main inflorescence, young stamen and young siliques. Highly expressed at the junction between the hypocotyl and the root, and at the marginal areas of cotyledons and true leaves, coinciding with the locations of the hydathode. Also highly expressed at the basal regions of the newly emerged lateral roots. In the floral organs, mostly expressed at the style of the pistil.

It is found in the endosome membrane. The protein localises to the late endosome membrane. Its function is as follows. Functions as a multidrug and toxin extrusion transporter that negatively regulates plant disease resistance. Plays an important role in maintaining normal plant architecture, possibly by regulating local auxin biosynthesis. May act as a negative regulator of hypocotyl cell elongation in the light. This chain is Protein DETOXIFICATION 51, found in Arabidopsis thaliana (Mouse-ear cress).